The primary structure comprises 267 residues: Dihydropteroate synthase (267 aa).

The 251-residue stretch at 1 to 251 folds into the Pterin-binding domain; it reads MTKTKIMGIL…NVELNAKLAK (251 aa). Position 11 (asparagine 11) interacts with Mg(2+). (7,8-dihydropterin-6-yl)methyl diphosphate contacts are provided by residues threonine 51, aspartate 84, asparagine 103, aspartate 167, lysine 203, and 239–241; that span reads RVH.

Belongs to the DHPS family. As to quaternary structure, homodimer. Requires Mg(2+) as cofactor.

It carries out the reaction (7,8-dihydropterin-6-yl)methyl diphosphate + 4-aminobenzoate = 7,8-dihydropteroate + diphosphate. Its pathway is cofactor biosynthesis; tetrahydrofolate biosynthesis; 7,8-dihydrofolate from 2-amino-4-hydroxy-6-hydroxymethyl-7,8-dihydropteridine diphosphate and 4-aminobenzoate: step 1/2. Functionally, catalyzes the condensation of para-aminobenzoate (pABA) with 6-hydroxymethyl-7,8-dihydropterin diphosphate (DHPt-PP) to form 7,8-dihydropteroate (H2Pte), the immediate precursor of folate derivatives. This chain is Dihydropteroate synthase (folP), found in Staphylococcus aureus (strain Mu50 / ATCC 700699).